A 524-amino-acid polypeptide reads, in one-letter code: CTP synthase (524 aa).

The amidoligase domain stretch occupies residues 1 to 263 (MKKYVIVTGG…HEKIASKLNV (263 aa)). Serine 13 serves as a coordination point for CTP. Position 13 (serine 13) interacts with UTP. ATP contacts are provided by residues 14-19 (GIGKGI) and aspartate 71. Positions 71 and 137 each coordinate Mg(2+). Residues 144 to 146 (DIE), 184 to 189 (KTKPTQ), and lysine 220 contribute to the CTP site. UTP contacts are provided by residues 184-189 (KTKPTQ) and lysine 220. A Glutamine amidotransferase type-1 domain is found at 282-524 (RIALVGKYLG…YLRKVLEGSQ (243 aa)). Glycine 342 provides a ligand contact to L-glutamine. The active-site Nucleophile; for glutamine hydrolysis is cysteine 369. L-glutamine-binding positions include 370–373 (LGMQ), glutamate 393, and arginine 451. Catalysis depends on residues histidine 499 and glutamate 501.

The protein belongs to the CTP synthase family. As to quaternary structure, homotetramer.

It catalyses the reaction UTP + L-glutamine + ATP + H2O = CTP + L-glutamate + ADP + phosphate + 2 H(+). The enzyme catalyses L-glutamine + H2O = L-glutamate + NH4(+). It carries out the reaction UTP + NH4(+) + ATP = CTP + ADP + phosphate + 2 H(+). It participates in pyrimidine metabolism; CTP biosynthesis via de novo pathway; CTP from UDP: step 2/2. With respect to regulation, allosterically activated by GTP, when glutamine is the substrate; GTP has no effect on the reaction when ammonia is the substrate. The allosteric effector GTP functions by stabilizing the protein conformation that binds the tetrahedral intermediate(s) formed during glutamine hydrolysis. Inhibited by the product CTP, via allosteric rather than competitive inhibition. Catalyzes the ATP-dependent amination of UTP to CTP with either L-glutamine or ammonia as the source of nitrogen. Regulates intracellular CTP levels through interactions with the four ribonucleotide triphosphates. The polypeptide is CTP synthase (Thermotoga maritima (strain ATCC 43589 / DSM 3109 / JCM 10099 / NBRC 100826 / MSB8)).